A 499-amino-acid chain; its full sequence is Multiphosphoryl transfer protein (499 aa).

Positions 2–142 (LELSESNIHL…AEFCAILMGE (141 aa)) constitute a PTS EIIA type-2 domain. Histidine 62 functions as the Tele-phosphohistidine intermediate; for EIIA activity in the catalytic mechanism. Residue histidine 62 is modified to Phosphohistidine; by HPr. A m domain region spans residues 155 to 285 (SLDVNTQSLL…SDVETQSVEG (131 aa)). Residues 286-376 (AVVGTFTIRN…KAIANGLGEN (91 aa)) enclose the HPr 1 domain. Histidine 300 serves as the catalytic Pros-phosphohistidine intermediate; for HPr 1 activity. Histidine 300 is modified (phosphohistidine). Residues 378-409 (SAVPPSEPDTIEIMGDQIHTPAVTEDDNLPAN) form a linker region. The 90-residue stretch at 410–499 (AIEAVFVIKN…GAVIESGLGE (90 aa)) folds into the HPr 2 domain. Histidine 424 is modified (phosphohistidine). Histidine 424 (pros-phosphohistidine intermediate; for HPr 2 activity) is an active-site residue.

It localises to the cytoplasm. Functionally, the phosphoenolpyruvate-dependent sugar phosphotransferase system (sugar PTS), a major carbohydrate active transport system, catalyzes the phosphorylation of incoming sugar substrates concomitantly with their translocation across the cell membrane. The enzyme II FruAB PTS system is involved in fructose transport. The chain is Multiphosphoryl transfer protein (fruB) from Haemophilus influenzae (strain ATCC 51907 / DSM 11121 / KW20 / Rd).